The primary structure comprises 115 residues: Probable mycobacterial cidal antitoxin Rv3188 (115 aa).

The protein belongs to the MbcA/ParS/Xre antitoxin family. As to quaternary structure, forms a heterotetramer with cognate toxin Rv3189.

Functionally, probable antitoxin component of a type II toxin-antitoxin (TA) system. Neutralizes the activity of cognate toxin Rv3189 by blocking access to the toxin active site. This Mycobacterium tuberculosis (strain ATCC 25618 / H37Rv) protein is Probable mycobacterial cidal antitoxin Rv3188.